Consider the following 224-residue polypeptide: Lipoprotein-releasing system ATP-binding protein LolD (224 aa).

Residues 5-224 (LEILDVSKCY…SLSGGMLTEL (220 aa)) form the ABC transporter domain. 40–47 (GSSGSGKS) serves as a coordination point for ATP.

The protein belongs to the ABC transporter superfamily. Lipoprotein translocase (TC 3.A.1.125) family. In terms of assembly, the complex is composed of two ATP-binding proteins (LolD) and two transmembrane proteins (LolC and LolE).

Its subcellular location is the cell inner membrane. In terms of biological role, part of the ABC transporter complex LolCDE involved in the translocation of mature outer membrane-directed lipoproteins, from the inner membrane to the periplasmic chaperone, LolA. Responsible for the formation of the LolA-lipoprotein complex in an ATP-dependent manner. The sequence is that of Lipoprotein-releasing system ATP-binding protein LolD from Anaplasma marginale (strain St. Maries).